Consider the following 192-residue polypeptide: CASP-like protein 2U1 (192 aa).

Residues 1–11 are Cytoplasmic-facing; it reads MASRKQGAREG. Residues 12–32 traverse the membrane as a helical segment; that stretch reads LWSMGVRLLTTLLCITSLILL. Over 33–58 the chain is Extracellular; that stretch reads LKAKQTVRRALGLGYIAQTVKYSDTS. A helical membrane pass occupies residues 59–79; that stretch reads GFIYLVYINILVAAYGLIVFV. Topologically, residues 80–96 are cytoplasmic; the sequence is SLIPSALGKSCSGKCSR. Residues 97 to 117 form a helical membrane-spanning segment; the sequence is WTIFVLDQVFAYVLLSAVSAA. At 118 to 145 the chain is on the extracellular side; sequence TEVLYLADKGMSKTQWEALCPTYGFFCH. A helical membrane pass occupies residues 146–166; the sequence is MVSASVAIGSVAVVLLAVLSV. Residues 167–192 are Cytoplasmic-facing; sequence SSAQSLFHNFYTRALYTTKMRHSSLT.

It belongs to the Casparian strip membrane proteins (CASP) family. In terms of assembly, homodimer and heterodimers.

It is found in the cell membrane. The protein is CASP-like protein 2U1 of Adiantum capillus-veneris (Maidenhair fern).